The primary structure comprises 160 residues: Cytochrome c-type biogenesis protein CcmE (160 aa).

Residues 1–8 (MNPRRKKR) lie on the Cytoplasmic side of the membrane. The helical; Signal-anchor for type II membrane protein transmembrane segment at 9–29 (LGIILAIFFGISATVGLMVYA) threads the bilayer. Residues 30 to 160 (LNQNMDLFYT…TTEQKEGNAQ (131 aa)) are Periplasmic-facing. 2 residues coordinate heme: H128 and Y132.

It belongs to the CcmE/CycJ family.

It is found in the cell inner membrane. Functionally, heme chaperone required for the biogenesis of c-type cytochromes. Transiently binds heme delivered by CcmC and transfers the heme to apo-cytochromes in a process facilitated by CcmF and CcmH. This is Cytochrome c-type biogenesis protein CcmE from Vibrio atlanticus (strain LGP32) (Vibrio splendidus (strain Mel32)).